Here is a 1196-residue protein sequence, read N- to C-terminus: Chromosome partition protein Smc (1196 aa).

32-39 (PNGSGKSN) contributes to the ATP binding site. 2 coiled-coil regions span residues 168 to 288 (LKHR…SVQQ) and 327 to 497 (DALE…LERK). The 112-residue stretch at 510–621 (AGILGPMAKL…VDDLDRALAL (112 aa)) folds into the SMC hinge domain. 2 coiled-coil regions span residues 654 to 829 (LEVT…RAQQ) and 972 to 1026 (DRPT…KDLL).

The protein belongs to the SMC family. Homodimer.

The protein localises to the cytoplasm. Functionally, required for chromosome condensation and partitioning. The protein is Chromosome partition protein Smc of Mycolicibacterium paratuberculosis (strain ATCC BAA-968 / K-10) (Mycobacterium paratuberculosis).